Consider the following 273-residue polypeptide: E3 ubiquitin-protein ligase SDIR1 (273 aa).

Residues 1–33 (MSFVFRGSRGDLESGFSGGFLPERRAMRVHGAR) lie on the Cytoplasmic side of the membrane. Residues 34–54 (PVNSNSLAFLVTVLLLFMILN) traverse the membrane as a helical segment. Residues 55–56 (SH) lie on the Lumenal side of the membrane. Residues 57–77 (QMPPNFLLWLVLGVFLMATTL) form a helical membrane-spanning segment. Residues 78 to 273 (RMYATCQQLQ…EIDDDASDMV (196 aa)) lie on the Cytoplasmic side of the membrane. The RING-type; atypical zinc-finger motif lies at 211–252 (CSVCLEQVTVGEIVRTLPCLHQFHAGCIDPWLRQQGTCPVCK).

As to quaternary structure, interacts with ATP1/SDIRIP1. In terms of tissue distribution, ubiquitous.

It is found in the endoplasmic reticulum membrane. The enzyme catalyses S-ubiquitinyl-[E2 ubiquitin-conjugating enzyme]-L-cysteine + [acceptor protein]-L-lysine = [E2 ubiquitin-conjugating enzyme]-L-cysteine + N(6)-ubiquitinyl-[acceptor protein]-L-lysine.. E3 ubiquitin-protein ligase that acts as a positive regulator of abscisic acid-related stress signal transduction. Interacts with and ubiquitinates ATP1/SDIRIP1 to modulate ATP1/SDIRIP1 stability through the 26S proteasome pathway. Regulates abscisic acid (ABA) and salt stress responses by negatively affecting ATP1/SDIRIP1 stability. The SDIR1-ATP1/SDIRIP1 complex plays an important role in ABA signaling through the ubiquitination pathway. This Arabidopsis thaliana (Mouse-ear cress) protein is E3 ubiquitin-protein ligase SDIR1.